Here is a 524-residue protein sequence, read N- to C-terminus: Beta-glucosidase 21 (524 aa).

Positions M1 to A24 are cleaved as a signal peptide. A beta-D-glucoside is bound at residue Q55. N61 is a glycosylation site (N-linked (GlcNAc...) asparagine). Residues H158 and N203 to E204 each bind a beta-D-glucoside. E204 acts as the Proton donor in catalysis. An intrachain disulfide couples C223 to C230. Residues Y346, E418, W468, E475–W476, and F484 contribute to the a beta-D-glucoside site. The active-site Nucleophile is the E418. N494 carries N-linked (GlcNAc...) asparagine glycosylation. Residues R521–L524 carry the Prevents secretion from ER motif.

Belongs to the glycosyl hydrolase 1 family. Component of the PYK10 complex, at least composed of PYK10/BGLU23, BGLU21, BGLU22, JAL22, JAL23, PBP1/JAL30, PBP2/JAL31, JAL32, JAL33, JAL34, JAL35, GLL22 and GLL23. Expressed exclusively in roots.

It localises to the endoplasmic reticulum lumen. It catalyses the reaction Hydrolysis of terminal, non-reducing beta-D-glucosyl residues with release of beta-D-glucose.. Its activity is regulated as follows. Activated upon binding to PBP1 or PBP2. Its function is as follows. Beta-D-glucosidase active on scopolin &gt;&gt; esculin &gt;&gt; 4-MU-glucoside &gt; DIMBOA-glucoside. No activity with pNP-glucoside, oNP-glucoside and sinigrin as substrates. The sequence is that of Beta-glucosidase 21 from Arabidopsis thaliana (Mouse-ear cress).